Reading from the N-terminus, the 412-residue chain is Arginine biosynthesis bifunctional protein ArgJ (412 aa).

Substrate is bound by residues threonine 162, lysine 188, threonine 199, glutamate 285, asparagine 407, and threonine 412. Threonine 199 (nucleophile) is an active-site residue.

It belongs to the ArgJ family. As to quaternary structure, heterotetramer of two alpha and two beta chains.

The protein resides in the cytoplasm. It catalyses the reaction N(2)-acetyl-L-ornithine + L-glutamate = N-acetyl-L-glutamate + L-ornithine. The catalysed reaction is L-glutamate + acetyl-CoA = N-acetyl-L-glutamate + CoA + H(+). It functions in the pathway amino-acid biosynthesis; L-arginine biosynthesis; L-ornithine and N-acetyl-L-glutamate from L-glutamate and N(2)-acetyl-L-ornithine (cyclic): step 1/1. Its pathway is amino-acid biosynthesis; L-arginine biosynthesis; N(2)-acetyl-L-ornithine from L-glutamate: step 1/4. Catalyzes two activities which are involved in the cyclic version of arginine biosynthesis: the synthesis of N-acetylglutamate from glutamate and acetyl-CoA as the acetyl donor, and of ornithine by transacetylation between N(2)-acetylornithine and glutamate. The protein is Arginine biosynthesis bifunctional protein ArgJ of Staphylococcus saprophyticus subsp. saprophyticus (strain ATCC 15305 / DSM 20229 / NCIMB 8711 / NCTC 7292 / S-41).